The sequence spans 313 residues: Ribosomal RNA small subunit methyltransferase H (313 aa).

Residues 35-37 (GGH), D55, F79, D100, and Q107 each bind S-adenosyl-L-methionine.

Belongs to the methyltransferase superfamily. RsmH family.

It is found in the cytoplasm. It catalyses the reaction cytidine(1402) in 16S rRNA + S-adenosyl-L-methionine = N(4)-methylcytidine(1402) in 16S rRNA + S-adenosyl-L-homocysteine + H(+). Specifically methylates the N4 position of cytidine in position 1402 (C1402) of 16S rRNA. This is Ribosomal RNA small subunit methyltransferase H from Burkholderia ambifaria (strain MC40-6).